The sequence spans 367 residues: MAFELCHTISVARLEKHKNLFLNYRNLNHFPLELLKDEGLQYLERLYMKRNSLTTLPENLAQKLPNLVELYLHSNNIVFVPEAIGSLVKLQSLDLSNNALEILCPDIGRLKSLRHLRLTNNRLKFLPPEIGKLKELQTLDLSTNHLVSLPEKLYQCQSLQYLTVDRNLLCSIPRQLCQLASLNELSMAGNRLASLPLDLGRSRELQYVYVDNNVQLKGLPSYLYNKVIGCSGCGSPVPLTENKLLSFTSGQLSIHVPAEVKSIGSATDFVLPLQELALRSLHAIFCSFLQDLSCTTPISLPKSLLELLQCPLGHCHRCSQSMFTIVYPKLFPLRETPMAGLHQGRTAVSFVAYCCSTQCLQTFDLLS.

LRR repeat units lie at residues 16 to 36 (KHKNLFLNYRNLNHFPLELLK), 42 to 63 (YLERLYMKRNSLTTLPENLAQK), 66 to 87 (NLVELYLHSNNIVFVPEAIGSL), 89 to 111 (KLQSLDLSNNALEILCPDIGRLK), 112 to 133 (SLRHLRLTNNRLKFLPPEIGKL), 135 to 156 (ELQTLDLSTNHLVSLPEKLYQC), 158 to 179 (SLQYLTVDRNLLCSIPRQLCQL), 181 to 202 (SLNELSMAGNRLASLPLDLGRS), and 204 to 226 (ELQYVYVDNNVQLKGLPSYLYNK).

This is Leucine-rich repeat-containing protein 28 (lrrc28) from Xenopus tropicalis (Western clawed frog).